We begin with the raw amino-acid sequence, 376 residues long: Queuine tRNA-ribosyltransferase (376 aa).

D93 functions as the Proton acceptor in the catalytic mechanism. Residues 93–97 (DSGGF), D147, Q190, and G217 contribute to the substrate site. Residues 248-254 (GVGTPDD) form an RNA binding region. Catalysis depends on D267, which acts as the Nucleophile. An RNA binding; important for wobble base 34 recognition region spans residues 272–276 (TRAGR).

Belongs to the queuine tRNA-ribosyltransferase family. As to quaternary structure, homodimer. Within each dimer, one monomer is responsible for RNA recognition and catalysis, while the other monomer binds to the replacement base PreQ1.

The catalysed reaction is 7-aminomethyl-7-carbaguanine + guanosine(34) in tRNA = 7-aminomethyl-7-carbaguanosine(34) in tRNA + guanine. It participates in tRNA modification; tRNA-queuosine biosynthesis. Functionally, catalyzes the base-exchange of a guanine (G) residue with the queuine precursor 7-aminomethyl-7-deazaguanine (PreQ1) at position 34 (anticodon wobble position) in tRNAs with GU(N) anticodons (tRNA-Asp, -Asn, -His and -Tyr). Catalysis occurs through a double-displacement mechanism. The nucleophile active site attacks the C1' of nucleotide 34 to detach the guanine base from the RNA, forming a covalent enzyme-RNA intermediate. The proton acceptor active site deprotonates the incoming PreQ1, allowing a nucleophilic attack on the C1' of the ribose to form the product. After dissociation, two additional enzymatic reactions on the tRNA convert PreQ1 to queuine (Q), resulting in the hypermodified nucleoside queuosine (7-(((4,5-cis-dihydroxy-2-cyclopenten-1-yl)amino)methyl)-7-deazaguanosine). This is Queuine tRNA-ribosyltransferase from Mesorhizobium japonicum (strain LMG 29417 / CECT 9101 / MAFF 303099) (Mesorhizobium loti (strain MAFF 303099)).